A 257-amino-acid chain; its full sequence is Outer membrane protein YaiO (257 aa).

Positions M1–A19 are cleaved as a signal peptide.

It localises to the cell outer membrane. In Escherichia coli (strain K12), this protein is Outer membrane protein YaiO (yaiO).